Reading from the N-terminus, the 343-residue chain is Heat-inducible transcription repressor HrcA (343 aa).

The protein belongs to the HrcA family.

Negative regulator of class I heat shock genes (grpE-dnaK-dnaJ and groELS operons). Prevents heat-shock induction of these operons. The polypeptide is Heat-inducible transcription repressor HrcA (Bacillus cytotoxicus (strain DSM 22905 / CIP 110041 / 391-98 / NVH 391-98)).